The chain runs to 199 residues: Mediator of RNA polymerase II transcription subunit 10 (199 aa).

The protein belongs to the Mediator complex subunit 10 family. Component of the Mediator complex.

It is found in the nucleus. In terms of biological role, component of the Mediator complex, a coactivator involved in the regulated transcription of nearly all RNA polymerase II-dependent genes. Mediator functions as a bridge to convey information from gene-specific regulatory proteins to the basal RNA polymerase II transcription machinery. Mediator is recruited to promoters by direct interactions with regulatory proteins and serves as a scaffold for the assembly of a functional preinitiation complex with RNA polymerase II and the general transcription factors. The protein is Mediator of RNA polymerase II transcription subunit 10 (NUT2) of Candida glabrata (strain ATCC 2001 / BCRC 20586 / JCM 3761 / NBRC 0622 / NRRL Y-65 / CBS 138) (Yeast).